Consider the following 704-residue polypeptide: Elongation factor G (704 aa).

The 283-residue stretch at 8–290 folds into the tr-type G domain; it reads ARYRNIGISA…AVIDYLPSPV (283 aa). Residues 17-24, 88-92, and 142-145 each bind GTP; these read AHIDAGKT, DTPGH, and NKMD.

The protein belongs to the TRAFAC class translation factor GTPase superfamily. Classic translation factor GTPase family. EF-G/EF-2 subfamily.

The protein resides in the cytoplasm. Its function is as follows. Catalyzes the GTP-dependent ribosomal translocation step during translation elongation. During this step, the ribosome changes from the pre-translocational (PRE) to the post-translocational (POST) state as the newly formed A-site-bound peptidyl-tRNA and P-site-bound deacylated tRNA move to the P and E sites, respectively. Catalyzes the coordinated movement of the two tRNA molecules, the mRNA and conformational changes in the ribosome. The chain is Elongation factor G from Cronobacter sakazakii (strain ATCC BAA-894) (Enterobacter sakazakii).